Reading from the N-terminus, the 1462-residue chain is NK-tumor recognition protein (1462 aa).

The 166-residue stretch at 10-175 folds into the PPIase cyclophilin-type domain; sequence HFDIEINREP…ADVRVIDCGV (166 aa). Disordered regions lie at residues 187-591 and 607-627; these read KKRK…TMAQ and VIPL…KPWK. Residues 198-213 are compositionally biased toward low complexity; that stretch reads SDSSSNSSSSSESSSE. The segment covering 221–240 has biased composition (basic residues); that stretch reads SRRRKHKRRPKVKRSKKRRK. 2 stretches are compositionally biased toward basic and acidic residues: residues 241–250 and 258–286; these read EASSSEEPRN and GHSE…RPEE. Residue lysine 323 forms a Glycyl lysine isopeptide (Lys-Gly) (interchain with G-Cter in SUMO2) linkage. The span at 329–345 shows a compositional bias: basic residues; the sequence is SGRKIKGRGTIRYHTPP. 3 positions are modified to phosphoserine: serine 379, serine 401, and serine 416. Residues 382–402 are compositionally biased toward basic and acidic residues; sequence KWSKGDKLSDPCSSRWDERSL. A compositionally biased stretch (polar residues) spans 403 to 421; the sequence is SQRSRSWSYNGYYSDLSTA. Positions 423–459 are enriched in basic residues; it reads HSGHHKKRRKEKKVKHKKKGKKQKHCRRHKQTKKRRI. Phosphoserine occurs at positions 463 and 471. A compositionally biased stretch (basic and acidic residues) spans 497 to 507; the sequence is KRDWSKSDKDV. A compositionally biased stretch (low complexity) spans 524–542; the sequence is HSQSYSRGSSRSRTASKSS. A compositionally biased stretch (basic residues) spans 543–568; that stretch reads SHSRSRSKSRSSSKSGHRKRASKSPR. Glycyl lysine isopeptide (Lys-Gly) (interchain with G-Cter in SUMO2) cross-links involve residues lysine 578 and lysine 581. A Phosphoserine modification is found at serine 613. Residue lysine 639 forms a Glycyl lysine isopeptide (Lys-Gly) (interchain with G-Cter in SUMO2) linkage. Serine 648 is subject to Phosphoserine. Glycyl lysine isopeptide (Lys-Gly) (interchain with G-Cter in SUMO2) cross-links involve residues lysine 656 and lysine 666. Residues 658–1072 form a disordered region; the sequence is TGSSSSYHKR…EEDLSGKHDT (415 aa). Composition is skewed to low complexity over residues 699–725 and 736–749; these read SRSY…PSSR and SQCS…SISS. Positions 754 to 774 are enriched in basic residues; sequence RAKRRLRSSGKKNSVSHKKHS. The span at 775–800 shows a compositional bias: basic and acidic residues; sequence SSSEKTLHSKYVKGRDRSSCVRKYSE. Over residues 801 to 815 the composition is skewed to low complexity; the sequence is SRSSLDYSSDSEQSS. Composition is skewed to basic and acidic residues over residues 823-870 and 885-909; these read QEKE…DHLR and WDSE…SSDK. Phosphoserine is present on residues serine 866, serine 887, serine 889, serine 891, and serine 907. Residues 910 to 922 show a composition bias toward acidic residues; that stretch reads EEGEATSDSESEV. Polar residues predominate over residues 932 to 969; it reads TTKSSTNTSLPDDNGAWKSSKQRTSTSDSEGSCSNSEN. Basic residues predominate over residues 988 to 1013; that stretch reads EHTKKVKEKLKGKKDKKHKAPKRKQA. Acidic residues predominate over residues 1022–1031; that stretch reads FGEEEEEEID. The segment covering 1032–1072 has biased composition (basic and acidic residues); sequence DKQVTQESKEKKVSENNETIKDNILKTEKSSEEDLSGKHDT. Lysine 1057 participates in a covalent cross-link: Glycyl lysine isopeptide (Lys-Gly) (interchain with G-Cter in SUMO2). Serine 1077 and serine 1146 each carry phosphoserine. The tract at residues 1129 to 1156 is disordered; sequence MEICTPDRSSPAKVEETSPLGNARLDTP. Position 1155 is a phosphothreonine (threonine 1155). A Glycyl lysine isopeptide (Lys-Gly) (interchain with G-Cter in SUMO2) cross-link involves residue lysine 1163. Residues 1169-1215 are disordered; the sequence is EHPQAEVVKQESSMSESKVLGEVGKQDSSSASLASAGESTGKKEVAE. A Glycyl lysine isopeptide (Lys-Gly) (interchain with G-Cter in SUMO1); alternate cross-link involves residue lysine 1177. Residue lysine 1177 forms a Glycyl lysine isopeptide (Lys-Gly) (interchain with G-Cter in SUMO2); alternate linkage. Serine 1203 carries the post-translational modification Phosphoserine. Residues lysine 1216, lysine 1225, and lysine 1258 each participate in a glycyl lysine isopeptide (Lys-Gly) (interchain with G-Cter in SUMO2) cross-link. The segment at 1251–1462 is disordered; the sequence is LTTVPEMKPQ…RSPSESSRYS (212 aa). Positions 1311–1348 are arg/Ser tandem repeat-rich; sequence SRSPSRSRSKSETKSRHRTRSVSYSHSRSRSRSSTSSY. Composition is skewed to low complexity over residues 1331 to 1351 and 1359 to 1376; these read SVSY…YRSR and RGWY…SYRS. The segment covering 1377–1388 has biased composition (basic residues); that stretch reads YKSHRTSSRSRS. Residues 1389–1410 show a composition bias toward low complexity; sequence RSSSYDPHSRSRSYTYDSYYSR. Positions 1425-1435 are enriched in basic residues; that stretch reads RGRSYNRRSRS.

It is found in the cell membrane. The catalysed reaction is [protein]-peptidylproline (omega=180) = [protein]-peptidylproline (omega=0). With respect to regulation, inhibited by cyclosporin A (CsA). Its function is as follows. PPIase that catalyzes the cis-trans isomerization of proline imidic peptide bonds in oligopeptides and may therefore assist protein folding. Component of a putative tumor-recognition complex involved in the function of NK cells. This Homo sapiens (Human) protein is NK-tumor recognition protein.